The chain runs to 341 residues: UDP-N-acetylenolpyruvoylglucosamine reductase (341 aa).

In terms of domain architecture, FAD-binding PCMH-type spans 15–185 (VEQSCLSLIE…TAVGLRLPKA (171 aa)). The active site involves Arg-161. Ser-231 (proton donor) is an active-site residue. Glu-327 is an active-site residue.

Belongs to the MurB family. FAD is required as a cofactor.

It is found in the cytoplasm. It catalyses the reaction UDP-N-acetyl-alpha-D-muramate + NADP(+) = UDP-N-acetyl-3-O-(1-carboxyvinyl)-alpha-D-glucosamine + NADPH + H(+). The protein operates within cell wall biogenesis; peptidoglycan biosynthesis. Cell wall formation. This Shewanella sp. (strain ANA-3) protein is UDP-N-acetylenolpyruvoylglucosamine reductase.